A 356-amino-acid chain; its full sequence is Nicotinate-nucleotide--dimethylbenzimidazole phosphoribosyltransferase (356 aa).

Catalysis depends on Glu-317, which acts as the Proton acceptor.

It belongs to the CobT family. In terms of assembly, homodimer.

It catalyses the reaction 5,6-dimethylbenzimidazole + nicotinate beta-D-ribonucleotide = alpha-ribazole 5'-phosphate + nicotinate + H(+). Its pathway is nucleoside biosynthesis; alpha-ribazole biosynthesis; alpha-ribazole from 5,6-dimethylbenzimidazole: step 1/2. In terms of biological role, catalyzes the synthesis of alpha-ribazole-5'-phosphate from nicotinate mononucleotide (NAMN) and 5,6-dimethylbenzimidazole (DMB). This is Nicotinate-nucleotide--dimethylbenzimidazole phosphoribosyltransferase from Salmonella gallinarum (strain 287/91 / NCTC 13346).